The primary structure comprises 282 residues: Ermin (282 aa).

Polar residues-rich tracts occupy residues 1 to 12 (MTDTPVTLSGSE) and 21 to 30 (NGQQPSSQTR). The segment at 1-71 (MTDTPVTLSG…NSKGNVLPRG (71 aa)) is disordered. A phosphoserine mark is found at serine 72, serine 212, serine 224, serine 228, and serine 231. Basic and acidic residues predominate over residues 212 to 224 (SPLKEESLAREDS). The segment at 212-246 (SPLKEESLAREDSPLSSPSSQPGTPDEQLVLGKKG) is disordered. Positions 225–234 (PLSSPSSQPG) are enriched in polar residues. A Phosphothreonine modification is found at threonine 235. A binds actin region spans residues 263–282 (KIRKGNTKQRIDEFESMMHL).

Binds actin. In terms of tissue distribution, expressed specifically by the oligodendrocytes. Highest expression seen in the spinal cord followed by brainstem, cerebellum, thalamus, and hypothalamus. In the myelin sheath, found mainly in the abaxon and the lateral few terminal loops. Its apposition to the myelinated axon, through the latter, defines an axonal subregion, termed juxtanode, at the Ranvier node-paranode junction.

It localises to the cytoplasm. It is found in the cytoskeleton. Plays a role in cytoskeletal rearrangements during the late wrapping and/or compaction phases of myelinogenesis as well as in maintenance and stability of myelin sheath in the adult. May play an important role in late-stage oligodendroglia maturation, myelin/Ranvier node formation during CNS development, and in the maintenance and plasticity of related structures in the mature CNS. In Rattus norvegicus (Rat), this protein is Ermin (Ermn).